Here is a 596-residue protein sequence, read N- to C-terminus: Deuterosome assembly protein 1 (596 aa).

Coiled coils occupy residues 8-68 (IARN…NHEI), 130-180 (CELQ…FQKE), and 227-284 (IENL…DLLR). Positions 297 to 306 (TANLANQKTA) are enriched in polar residues. The interval 297–316 (TANLANQKTAQGEEASFQVT) is disordered. Residues 337–402 (SEKYQAENDL…LKGAQNRQTS (66 aa)) adopt a coiled-coil conformation. The tract at residues 447-467 (DKPQKHRSFHGENNSLKPTNY) is disordered. A compositionally biased stretch (polar residues) spans 457–467 (GENNSLKPTNY).

This sequence belongs to the CEP63 family.

Its subcellular location is the cytoplasm. In terms of biological role, key structural component of the deuterosome, a structure that promotes de novo centriole amplification in multiciliated cells. Deuterosome-mediated centriole amplification occurs in terminally differentiated multiciliated cells and can generate more than 100 centrioles. Probably sufficient for the specification and formation of the deuterosome inner core. This chain is Deuterosome assembly protein 1, found in Xenopus tropicalis (Western clawed frog).